The sequence spans 581 residues: MAGIQQQQLVNDTLPASWNGSSNRIASVNVEEGQPQPWVDDLDLEDPNHQKPGWRKFLSYVGPGFLVSLAYLDPGNLETDLQAGANHRYELLWVILIGLIFALIIQSLAANLGVSTGKTFKHHTSWILGKHLSELCKAEYPKYVKYCLWLLAEIAVIAADIPEGIISSLLYYFKLILDTYLLIGTAFALNILFHIPVWVGVLCTGCSTLLLLGLQKYGVRKLELLIAVLVFVMAACFFGEMSYVKPSATDVLKGMFIPKLSGQGATGDAIALLGALIMPHNLFLHSALVLSRKMPNSVRGINDACRYFLIESGFALFIAFLINLAVISVSGTVCSAQNLSSENADRCGDLTLNSASFLLQNVLGKSSSKIYAIALLASGQSSTITGTYAGQYIMQGFLELKMRKWIRNLVTRCIAIAPSLVVSIIGGSSGAGRLIIIASVLQMILSFELPFALIPLLKFSSSTTKMGPHKNSIYIIVISWILGLGIIGVNIYYLSTGFVGWLIDNNLPKVGNVFIGIIVFPLMAIYILAVIYLTFRKDSVVTFLGPNKNDPQQQANMENGLGPEMERVPYREDLADIPLPE.

N-linked (GlcNAc...) asparagine glycans are attached at residues N11 and N19. 7 consecutive transmembrane segments (helical) span residues 57 to 77 (FLSY…PGNL), 90 to 110 (ELLW…SLAA), 146 to 166 (YCLW…EGII), 181 to 201 (LLIG…WVGV), 224 to 244 (LLIA…MSYV), 270 to 290 (IALL…ALVL), and 307 to 327 (YFLI…LAVI). Residue N338 is glycosylated (N-linked (GlcNAc...) asparagine). 5 helical membrane passes run 370-390 (IYAI…TYAG), 409-429 (LVTR…GGSS), 434-454 (LIII…FALI), 473-493 (IYII…NIYY), and 513-533 (VFIG…VIYL). The tract at residues 551–581 (PQQQANMENGLGPEMERVPYREDLADIPLPE) is disordered. A compositionally biased stretch (basic and acidic residues) spans 564-574 (EMERVPYREDL).

The protein belongs to the NRAMP (TC 2.A.55) family.

The protein localises to the membrane. Functionally, probable divalent metal transporter. This Populus trichocarpa (Western balsam poplar) protein is Metal transporter Nramp7.1.